Consider the following 983-residue polypeptide: Protein CLASP-3 (983 aa).

2 disordered regions span residues 356-393 and 666-690; these read YPNR…TQKA and SNNI…QKES. Positions 359-372 are enriched in low complexity; it reads RPGSRTRTSSITST. The stretch at 918–956 is one HEAT repeat; that stretch reads ITPTIIKAYQSTSSTVRKTVVYCLVAMVNRVGEQRMTPH.

Belongs to the CLASP family.

The protein localises to the cytoplasm. Its subcellular location is the cytoskeleton. Its function is as follows. Microtubule plus-end tracking protein that promotes the stabilization of dynamic microtubules. This Caenorhabditis elegans protein is Protein CLASP-3 (cls-3).